The following is a 339-amino-acid chain: MSIARRTTLSKFLIEQQRETNNLPADLRLLIEVVARACKAISYNVSKGALGEALGTAGSENVQGEVQKKLDILSNEILLDANEWGGNLAAMASEEMETFFPIPANYPRGEYLLVFDPLDGSSNIDVNVSIGTIFSVLRCPDGKQATEESFLQPGTEQVAAGYAVYGPQTVFVLTTGNGVNCFTLDREVGSWVLTQSNMQIPADTREYAINASNARHWYEPVQRYVDELNAGKDGPRGDNFNMRWIASMVADVHRILNRGGIFMYPADKRTPDRPGKLRLMYEANPMSFIVEQAGGAATTGTQRIMEVQPTGLHQRVPVFLGSKNEVERVTGYHAEGEGK.

Mg(2+)-binding residues include E94, D116, L118, and D119. Substrate-binding positions include 119–122, N210, and K276; that span reads DGSS. Residue E282 participates in Mg(2+) binding.

This sequence belongs to the FBPase class 1 family. Homotetramer. The cofactor is Mg(2+).

It localises to the cytoplasm. The enzyme catalyses beta-D-fructose 1,6-bisphosphate + H2O = beta-D-fructose 6-phosphate + phosphate. It functions in the pathway carbohydrate biosynthesis; gluconeogenesis. In Burkholderia ambifaria (strain ATCC BAA-244 / DSM 16087 / CCUG 44356 / LMG 19182 / AMMD) (Burkholderia cepacia (strain AMMD)), this protein is Fructose-1,6-bisphosphatase class 1.